A 152-amino-acid chain; its full sequence is Large ribosomal subunit protein uL15 (152 aa).

Residues 31–58 are disordered; the sequence is GASCGFGMRGQKSRSGRPTRPGFEGGQM.

It belongs to the universal ribosomal protein uL15 family. As to quaternary structure, part of the 50S ribosomal subunit.

Its function is as follows. Binds to the 23S rRNA. This Parasynechococcus marenigrum (strain WH8102) protein is Large ribosomal subunit protein uL15.